The chain runs to 214 residues: Probable transaldolase (214 aa).

Residue lysine 83 is the Schiff-base intermediate with substrate of the active site.

This sequence belongs to the transaldolase family. Type 3B subfamily.

Its subcellular location is the cytoplasm. It catalyses the reaction D-sedoheptulose 7-phosphate + D-glyceraldehyde 3-phosphate = D-erythrose 4-phosphate + beta-D-fructose 6-phosphate. It participates in carbohydrate degradation; pentose phosphate pathway; D-glyceraldehyde 3-phosphate and beta-D-fructose 6-phosphate from D-ribose 5-phosphate and D-xylulose 5-phosphate (non-oxidative stage): step 2/3. Transaldolase is important for the balance of metabolites in the pentose-phosphate pathway. This is Probable transaldolase from Desulfosudis oleivorans (strain DSM 6200 / JCM 39069 / Hxd3) (Desulfococcus oleovorans).